Here is a 377-residue protein sequence, read N- to C-terminus: Succinyl-diaminopimelate desuccinylase (377 aa).

A Zn(2+)-binding site is contributed by His66. The active site involves Asp68. Asp99 contributes to the Zn(2+) binding site. The active-site Proton acceptor is Glu133. Zn(2+) is bound by residues Glu134, Glu162, and His348.

Belongs to the peptidase M20A family. DapE subfamily. Homodimer. Requires Zn(2+) as cofactor. The cofactor is Co(2+).

It carries out the reaction N-succinyl-(2S,6S)-2,6-diaminopimelate + H2O = (2S,6S)-2,6-diaminopimelate + succinate. Its pathway is amino-acid biosynthesis; L-lysine biosynthesis via DAP pathway; LL-2,6-diaminopimelate from (S)-tetrahydrodipicolinate (succinylase route): step 3/3. Catalyzes the hydrolysis of N-succinyl-L,L-diaminopimelic acid (SDAP), forming succinate and LL-2,6-diaminopimelate (DAP), an intermediate involved in the bacterial biosynthesis of lysine and meso-diaminopimelic acid, an essential component of bacterial cell walls. This Methylococcus capsulatus (strain ATCC 33009 / NCIMB 11132 / Bath) protein is Succinyl-diaminopimelate desuccinylase.